The following is a 319-amino-acid chain: Malate dehydrogenase (319 aa).

NAD(+) contacts are provided by residues 10–15 and Asp34; that span reads GSGNIG. Positions 83 and 89 each coordinate substrate. NAD(+) is bound by residues Asn96 and 119 to 121; that span reads ITN. The substrate site is built by Asn121 and Arg152. His176 (proton acceptor) is an active-site residue.

It belongs to the LDH/MDH superfamily. MDH type 3 family.

It catalyses the reaction (S)-malate + NAD(+) = oxaloacetate + NADH + H(+). Catalyzes the reversible oxidation of malate to oxaloacetate. The protein is Malate dehydrogenase of Paramagnetospirillum magneticum (strain ATCC 700264 / AMB-1) (Magnetospirillum magneticum).